A 476-amino-acid polypeptide reads, in one-letter code: NADH-quinone oxidoreductase subunit N (476 aa).

Helical transmembrane passes span 10-30 (AVLPELLLALSAVVLVLIGAI), 42-62 (LAIAALVAAGVLVMLQPAVTI), 77-97 (FMKVVALLGAAVSLIMSVDWL), 108-128 (AVLVVLASLGICILISAGDLI), 129-149 (ALYLGLELMSLSLYVVAAINR), 162-182 (FVLGALSSGMLLYGASLIYGF), 202-222 (LVFGIVFLFAGLCFKVSAVPF), 234-254 (PTPVTAFFATAPKVAAMAVFV), 268-288 (WQQIVTFVSIASMALGAFAAI), 296-316 (LLAYSSIGHMGFALVGLAAGT), 323-343 (VLLYMAIYVVMTLGSFTCVLA), 368-388 (ALALAALMFSLAGIPPLAGFV), 392-412 (YVFLAAIQAGLYGLAVIGVVA), and 445-465 (AVLAVSGLFTTFFFLAPTPLI).

It belongs to the complex I subunit 2 family. NDH-1 is composed of 14 different subunits. Subunits NuoA, H, J, K, L, M, N constitute the membrane sector of the complex.

It localises to the cell inner membrane. It carries out the reaction a quinone + NADH + 5 H(+)(in) = a quinol + NAD(+) + 4 H(+)(out). NDH-1 shuttles electrons from NADH, via FMN and iron-sulfur (Fe-S) centers, to quinones in the respiratory chain. The immediate electron acceptor for the enzyme in this species is believed to be ubiquinone. Couples the redox reaction to proton translocation (for every two electrons transferred, four hydrogen ions are translocated across the cytoplasmic membrane), and thus conserves the redox energy in a proton gradient. This chain is NADH-quinone oxidoreductase subunit N, found in Azorhizobium caulinodans (strain ATCC 43989 / DSM 5975 / JCM 20966 / LMG 6465 / NBRC 14845 / NCIMB 13405 / ORS 571).